A 466-amino-acid polypeptide reads, in one-letter code: Ribosomal protein uS12 methylthiotransferase RimO (466 aa).

The region spanning P31–P141 is the MTTase N-terminal domain. 6 residues coordinate [4Fe-4S] cluster: C40, C76, C105, C172, C176, and C179. Positions L158–A397 constitute a Radical SAM core domain. The 67-residue stretch at A400–R466 folds into the TRAM domain.

The protein belongs to the methylthiotransferase family. RimO subfamily. It depends on [4Fe-4S] cluster as a cofactor.

Its subcellular location is the cytoplasm. It carries out the reaction L-aspartate(89)-[ribosomal protein uS12]-hydrogen + (sulfur carrier)-SH + AH2 + 2 S-adenosyl-L-methionine = 3-methylsulfanyl-L-aspartate(89)-[ribosomal protein uS12]-hydrogen + (sulfur carrier)-H + 5'-deoxyadenosine + L-methionine + A + S-adenosyl-L-homocysteine + 2 H(+). In terms of biological role, catalyzes the methylthiolation of an aspartic acid residue of ribosomal protein uS12. This Ruegeria pomeroyi (strain ATCC 700808 / DSM 15171 / DSS-3) (Silicibacter pomeroyi) protein is Ribosomal protein uS12 methylthiotransferase RimO.